The primary structure comprises 349 residues: Mitomycin biosynthesis 6-O-methyltransferase (349 aa).

S-adenosyl-L-methionine-binding positions include Ser167, Gly190, 213–214 (ER), 240–241 (DF), and Lys255. The active-site Proton acceptor is the His259. A substrate-binding site is contributed by Asn288.

Belongs to the class I-like SAM-binding methyltransferase superfamily. Cation-independent O-methyltransferase family. COMT subfamily. Homodimer.

It catalyses the reaction 6-demethylmitomycin A + S-adenosyl-L-methionine = mitomycin A + S-adenosyl-L-homocysteine. The catalysed reaction is 6-demethylmitomycin B + S-adenosyl-L-methionine = mitomycin B + S-adenosyl-L-homocysteine. Completely inhibited by Zn(2+) and Cu(2+). Its function is as follows. Involved in the biosynthesis of the quinone methoxy group present in the mitomycin A and B, which are used as anticancer agents. In vitro, catalyzes the 6-O-methylation of both C9-beta- and C9-alpha-configured 6-hydroxymitomycins via the transfer of the S-methyl group of S-adenosyl-L-methionine (AdoMet) to the 6-demethylmitomycin A and B. It can also use hydroxyquinone as substrate. This is Mitomycin biosynthesis 6-O-methyltransferase from Streptomyces lavendulae.